A 380-amino-acid chain; its full sequence is Queuine tRNA-ribosyltransferase (380 aa).

Asp-96 (proton acceptor) is an active-site residue. Substrate is bound by residues 96-100 (DSGGF), Asp-150, Gln-193, and Gly-220. The interval 251-257 (GVGAPDS) is RNA binding. Asp-270 serves as the catalytic Nucleophile. The interval 275 to 279 (TRIAR) is RNA binding; important for wobble base 34 recognition. The Zn(2+) site is built by Cys-308, Cys-310, Cys-313, and His-339.

Belongs to the queuine tRNA-ribosyltransferase family. As to quaternary structure, homodimer. Within each dimer, one monomer is responsible for RNA recognition and catalysis, while the other monomer binds to the replacement base PreQ1. Zn(2+) serves as cofactor.

The catalysed reaction is 7-aminomethyl-7-carbaguanine + guanosine(34) in tRNA = 7-aminomethyl-7-carbaguanosine(34) in tRNA + guanine. It functions in the pathway tRNA modification; tRNA-queuosine biosynthesis. Functionally, catalyzes the base-exchange of a guanine (G) residue with the queuine precursor 7-aminomethyl-7-deazaguanine (PreQ1) at position 34 (anticodon wobble position) in tRNAs with GU(N) anticodons (tRNA-Asp, -Asn, -His and -Tyr). Catalysis occurs through a double-displacement mechanism. The nucleophile active site attacks the C1' of nucleotide 34 to detach the guanine base from the RNA, forming a covalent enzyme-RNA intermediate. The proton acceptor active site deprotonates the incoming PreQ1, allowing a nucleophilic attack on the C1' of the ribose to form the product. After dissociation, two additional enzymatic reactions on the tRNA convert PreQ1 to queuine (Q), resulting in the hypermodified nucleoside queuosine (7-(((4,5-cis-dihydroxy-2-cyclopenten-1-yl)amino)methyl)-7-deazaguanosine). This Streptococcus pyogenes serotype M49 (strain NZ131) protein is Queuine tRNA-ribosyltransferase.